We begin with the raw amino-acid sequence, 310 residues long: UPF0324 membrane protein VP0936 (310 aa).

A run of 10 helical transmembrane segments spans residues 7–29 (PFGL…LVIG), 44–63 (IASF…GFGI), 75–94 (GIGL…SLIA), 104–126 (AYLI…APAI), 133–155 (IGLA…PVIG), 165–187 (FGTW…SAYG), 199–218 (LARA…IFSR), 228–250 (LVIP…FPQL), 257–279 (IFTI…ISIS), and 289–308 (LLFG…SWLV).

The protein belongs to the UPF0324 family.

It is found in the cell membrane. The sequence is that of UPF0324 membrane protein VP0936 from Vibrio parahaemolyticus serotype O3:K6 (strain RIMD 2210633).